We begin with the raw amino-acid sequence, 537 residues long: MSGDGEDELCRNALALVNELCFSVRGNHNNEKCIEFSYLLRDRDRTRHIETDISVSLLSVIVTFCGIVLLGVSLFVSWKLCWIPWRDKGLNPQRRDSQHHPHQHLHHHHSHFTDLTVERVDCGPEMPERSYLDLESYPESGIKLSQTSPDIPVDTSSGSKENNIPNAHSQQQVSAPPPATRFNSLPRPIPQQLSSPEFGTQADEKVEQVTSIGQIKPELYKQRSIDTEAKKHQKVNCGRINFMLRYTYTTEQLVVKILKALDLPAKDANGFSDPYVKIYLLPDRKKKFQTKVHRKTLNPIFNETFQFNVPFNELQNRKLHFSVYDFDRFSRHDLIGQVVLDNLLEFSDFSEDTTIWRDILEATSEKADLGEINFSLCYLPTAGRLTITIIKATNLKAMDLTGFSDPYVKASLICDERRLKKRKTSIKKNTLNPVYNEALVFDIPNENMEHVNVIIAVMDYDCIGHNEVIGMCRVGNATDGPGREHWNEMLANPRKPIEQWHQLIEEKVMNSYMTKSFAAGTGATKPVTIVVESPHSV.

Residues 1–52 (MSGDGEDELCRNALALVNELCFSVRGNHNNEKCIEFSYLLRDRDRTRHIETD) lie on the Vesicular side of the membrane. Residues 53–78 (ISVSLLSVIVTFCGIVLLGVSLFVSW) form a helical membrane-spanning segment. Residues 79–537 (KLCWIPWRDK…TIVVESPHSV (459 aa)) lie on the Cytoplasmic side of the membrane. Disordered regions lie at residues 92–111 (PQRR…HHSH) and 142–200 (IKLS…EFGT). A compositionally biased stretch (basic residues) spans 100–110 (HPHQHLHHHHS). Residues 143–174 (KLSQTSPDIPVDTSSGSKENNIPNAHSQQQVS) show a composition bias toward polar residues. The interval 228–477 (EAKKHQKVNC…VIGMCRVGNA (250 aa)) is phospholipid binding. C2 domains are found at residues 236 to 357 (NCGR…TIWR) and 368 to 501 (DLGE…EQWH). Ca(2+)-binding residues include Asp-267, Asp-273, Asp-325, Phe-326, Asp-327, Ser-330, Asp-333, Asp-399, Asp-405, Asp-459, and Asp-461.

Belongs to the synaptotagmin family. As to quaternary structure, homodimer or homotrimer (possible). The cofactor is Ca(2+).

The protein resides in the cytoplasmic vesicle. The protein localises to the secretory vesicle. It is found in the synaptic vesicle membrane. Its subcellular location is the synapse. Its function is as follows. May have a regulatory role in the membrane interactions during trafficking of synaptic vesicles at the active zone of the synapse. It binds acidic phospholipids with a specificity that requires the presence of both an acidic head group and a diacyl backbone. The polypeptide is Synaptotagmin-C (P65-C) (Diplobatis ommata (Ocellated electric ray)).